We begin with the raw amino-acid sequence, 223 residues long: uncharacterized protein (223 aa).

The next 5 helical transmembrane spans lie at 28-48 (LSNT…GLIT), 59-79 (LIVQ…ITLA), 88-108 (AFNQ…MFFI), 128-148 (IVGL…VWLS), and 176-196 (AWAI…YMIV).

It localises to the cell membrane. This is an uncharacterized protein from Mycoplasma pneumoniae (strain ATCC 29342 / M129 / Subtype 1) (Mycoplasmoides pneumoniae).